The chain runs to 319 residues: NADH-quinone oxidoreductase subunit H 1 (319 aa).

The next 8 helical transmembrane spans lie at 1 to 21 (MIGLIITATISVTLIMVLLVV), 74 to 94 (FAYILAPAVAATPVLAGFGVI), 107 to 127 (VGVLFLIGMLGLTAYAVVLGA), 147 to 167 (LAYEVFLGLSLMGAVMLAGSL), 179 to 199 (VWFVVLQPLGAALFCIAGVAA), 238 to 258 (VLLVSALAVTLFFGGWLGPWL), 262 to 282 (IWFGLKTGVIAVVFVWLRATL), and 293 to 313 (FAWKIALPLSLANLLLTGIVV).

The protein belongs to the complex I subunit 1 family. As to quaternary structure, NDH-1 is composed of 14 different subunits. Subunits NuoA, H, J, K, L, M, N constitute the membrane sector of the complex.

Its subcellular location is the cell inner membrane. It carries out the reaction a quinone + NADH + 5 H(+)(in) = a quinol + NAD(+) + 4 H(+)(out). In terms of biological role, NDH-1 shuttles electrons from NADH, via FMN and iron-sulfur (Fe-S) centers, to quinones in the respiratory chain. The immediate electron acceptor for the enzyme in this species is believed to be ubiquinone. Couples the redox reaction to proton translocation (for every two electrons transferred, four hydrogen ions are translocated across the cytoplasmic membrane), and thus conserves the redox energy in a proton gradient. This subunit may bind ubiquinone. The sequence is that of NADH-quinone oxidoreductase subunit H 1 from Rhodopseudomonas palustris (strain BisB5).